Consider the following 540-residue polypeptide: MRVNNGLTPQELEAYGISDVHDIVYNPSYDLLYQEELDPSLTGYERGVLTNLGAVAVDTGIFTGRSPKDKYIVRDDTTRDTFWWADKGKGKNDNKPLSPETWQHLKGLVTKQLSGKRLFVVDAFCGANPDTRLSVRFITEVAWQAHFVKNMFIRPSDEELAGFKPDFIVMNGAKCTNPQWKEQGLNSENFVAFNLTERMQLIGGTWYGGEMKKGMFSMMNYLLPLKGIASMHCSANVSEKGDVAVFFGLSGTGKTTLSTDPKRRLIGDDEHGWDDDGVFNFEGGCYAKTIKLSKEAEPEIYNAIRRDALLENVTVREDGTIDFDDGSKTENTRVSYPIYHIDNIVKPVSKAGHATKVIFLTADAFGVLPPVSRLTADQTQYHFLSGFTAKLAGTERGITEPTPTFSACFGAAFLSLHPTQYAEVLVKRMQAAGAQAYLVNTGWNGTGKRISIKDTRAIIDAILNGSLDNAETFTLPMFNLAIPTELPGVDTKILDPRNTYASPEQWQEKAETLAKLFIDNFDKYTDTPAGAALVAAGPKL.

A substrate-binding site is contributed by Arg-65. Lys-87 bears the N6-acetyllysine mark. Positions 207 and 213 each coordinate substrate. ATP-binding positions include Lys-213, His-232, and 248-256 (GLSGTGKTT). 2 residues coordinate Mn(2+): Lys-213 and His-232. Asp-269 provides a ligand contact to Mn(2+). ATP is bound by residues Glu-297, Arg-333, 449 to 450 (RI), and Thr-455. Arg-333 contacts substrate. The residue at position 523 (Lys-523) is an N6-acetyllysine.

It belongs to the phosphoenolpyruvate carboxykinase (ATP) family. Monomer. Mn(2+) is required as a cofactor.

It localises to the cytoplasm. It carries out the reaction oxaloacetate + ATP = phosphoenolpyruvate + ADP + CO2. It functions in the pathway carbohydrate biosynthesis; gluconeogenesis. Its function is as follows. Involved in the gluconeogenesis. Catalyzes the conversion of oxaloacetate (OAA) to phosphoenolpyruvate (PEP) through direct phosphoryl transfer between the nucleoside triphosphate and OAA. The protein is Phosphoenolpyruvate carboxykinase (ATP) of Escherichia coli O157:H7.